The primary structure comprises 162 residues: 2-C-methyl-D-erythritol 2,4-cyclodiphosphate synthase (162 aa).

A divalent metal cation contacts are provided by Asp-10 and His-12. 4-CDP-2-C-methyl-D-erythritol 2-phosphate contacts are provided by residues 10–12 (DVH) and 36–37 (HS). Residue His-44 coordinates a divalent metal cation. 4-CDP-2-C-methyl-D-erythritol 2-phosphate is bound by residues 58-60 (DIG), 63-67 (FPDTD), 102-108 (AQAPRMA), 134-137 (TTSE), Phe-141, and Arg-144.

It belongs to the IspF family. Homotrimer. A divalent metal cation serves as cofactor.

It catalyses the reaction 4-CDP-2-C-methyl-D-erythritol 2-phosphate = 2-C-methyl-D-erythritol 2,4-cyclic diphosphate + CMP. It participates in isoprenoid biosynthesis; isopentenyl diphosphate biosynthesis via DXP pathway; isopentenyl diphosphate from 1-deoxy-D-xylulose 5-phosphate: step 4/6. Functionally, involved in the biosynthesis of isopentenyl diphosphate (IPP) and dimethylallyl diphosphate (DMAPP), two major building blocks of isoprenoid compounds. Catalyzes the conversion of 4-diphosphocytidyl-2-C-methyl-D-erythritol 2-phosphate (CDP-ME2P) to 2-C-methyl-D-erythritol 2,4-cyclodiphosphate (ME-CPP) with a corresponding release of cytidine 5-monophosphate (CMP). This chain is 2-C-methyl-D-erythritol 2,4-cyclodiphosphate synthase, found in Chromohalobacter salexigens (strain ATCC BAA-138 / DSM 3043 / CIP 106854 / NCIMB 13768 / 1H11).